A 282-amino-acid chain; its full sequence is NAD(P)H-hydrate epimerase (282 aa).

Residues 1–53 (MSGLRTLLGLGLLVAGSRLPRIASRQSVCRAGPIWWGTQHRSSETMASAAVKY) constitute a mitochondrion transit peptide. The region spanning 59 to 269 (AQAVDEELFN…ALEKKYQLNL (211 aa)) is the YjeF N-terminal domain. 113–117 (NNGGD) lines the (6S)-NADPHX pocket. N114 is a K(+) binding site. K138 is modified (N6-succinyllysine). Position 179 (D179) interacts with K(+). (6S)-NADPHX contacts are provided by residues 183-189 (GFSFKGD) and D212. K(+) is bound at residue S215.

Belongs to the NnrE/AIBP family. In terms of assembly, homodimer. Interacts with APOA1 and APOA2. The cofactor is K(+). Post-translationally, undergoes physiological phosphorylation during sperm capacitation, downstream to PKA activation.

Its subcellular location is the mitochondrion. The protein localises to the secreted. The catalysed reaction is (6R)-NADHX = (6S)-NADHX. The enzyme catalyses (6R)-NADPHX = (6S)-NADPHX. Functionally, catalyzes the epimerization of the S- and R-forms of NAD(P)HX, a damaged form of NAD(P)H that is a result of enzymatic or heat-dependent hydration. This is a prerequisite for the S-specific NAD(P)H-hydrate dehydratase to allow the repair of both epimers of NAD(P)HX. Accelerates cholesterol efflux from endothelial cells to high-density lipoprotein (HDL) and thereby regulates angiogenesis. The protein is NAD(P)H-hydrate epimerase of Rattus norvegicus (Rat).